A 414-amino-acid chain; its full sequence is Serine/threonine transporter SstT (414 aa).

8 helical membrane-spanning segments follow: residues 16 to 36, 46 to 66, 84 to 104, 143 to 163, 180 to 200, 219 to 239, 300 to 320, and 332 to 352; these read GSLVKQILVGLVLGILLAWVS, LGTLFVGALKAVAPILVLMLV, ILFLYLLGTFSAALAAVVFSF, ALLNANYIGILVWAVGLGFAL, AVTFMVKLVIRFAPVGIFGLV, LVVLIGCMLLVALVVNPLLVF, MAGAAITITVLTLAAVHTLGV, and VVASLCACGASGVAGGSLLLI.

It belongs to the dicarboxylate/amino acid:cation symporter (DAACS) (TC 2.A.23) family.

It localises to the cell inner membrane. It carries out the reaction L-serine(in) + Na(+)(in) = L-serine(out) + Na(+)(out). It catalyses the reaction L-threonine(in) + Na(+)(in) = L-threonine(out) + Na(+)(out). In terms of biological role, involved in the import of serine and threonine into the cell, with the concomitant import of sodium (symport system). The chain is Serine/threonine transporter SstT from Salmonella arizonae (strain ATCC BAA-731 / CDC346-86 / RSK2980).